Reading from the N-terminus, the 192-residue chain is Fe/S biogenesis protein NfuA (192 aa).

Cysteine 149 and cysteine 152 together coordinate [4Fe-4S] cluster.

It belongs to the NfuA family. Homodimer. [4Fe-4S] cluster serves as cofactor.

Its function is as follows. Involved in iron-sulfur cluster biogenesis. Binds a 4Fe-4S cluster, can transfer this cluster to apoproteins, and thereby intervenes in the maturation of Fe/S proteins. Could also act as a scaffold/chaperone for damaged Fe/S proteins. In Aeromonas salmonicida (strain A449), this protein is Fe/S biogenesis protein NfuA.